The primary structure comprises 435 residues: Serine carboxypeptidase-like 16 (435 aa).

The N-terminal stretch at 1 to 23 (MGSWIPKLLLLQLVLLLTKHADS) is a signal peptide. Cystine bridges form between C82–C325, C246–C260, and C284–C291. A glycan (N-linked (GlcNAc...) asparagine) is linked at N103. Residue S178 is part of the active site. N305 carries N-linked (GlcNAc...) asparagine glycosylation. Residue D360 is part of the active site. The N-linked (GlcNAc...) asparagine glycan is linked to N376. The active site involves H413.

Belongs to the peptidase S10 family. As to expression, expressed in seedlings, roots and leaves.

The protein resides in the secreted. In terms of biological role, probable carboxypeptidase. In Arabidopsis thaliana (Mouse-ear cress), this protein is Serine carboxypeptidase-like 16 (SCPL16).